Reading from the N-terminus, the 221-residue chain is Iron-sulfur cluster repair protein YtfE (221 aa).

This sequence belongs to the RIC family. YtfE subfamily. Homodimer.

The protein resides in the cytoplasm. Di-iron-containing protein involved in the repair of iron-sulfur clusters damaged by oxidative and nitrosative stress conditions. The protein is Iron-sulfur cluster repair protein YtfE of Yersinia pseudotuberculosis serotype O:1b (strain IP 31758).